The primary structure comprises 120 residues: Crustacean hyperglycemic hormones 1 (120 aa).

Residues 1-24 (MIAFRAVWSALLASLLLLLLAPSA) form the signal peptide. Cystine bridges form between cysteine 53/cysteine 89, cysteine 69/cysteine 85, and cysteine 72/cysteine 98. Position 118 is a valine amide (valine 118).

Belongs to the arthropod CHH/MIH/GIH/VIH hormone family. In terms of tissue distribution, produced by the medulla terminalis X-organ in the eyestalks and transported to the sinus gland where they are stored and released.

Its subcellular location is the secreted. Hormone found in the sinus gland of isopods and decapods which controls the blood sugar level. Has a secretagogue action over the amylase released from the midgut gland. May act as a stress hormone and may be involved in the control of molting and reproduction. This is Crustacean hyperglycemic hormones 1 from Penaeus japonicus (Kuruma prawn).